Consider the following 97-residue polypeptide: Lipolysis-activating peptide 1-alpha chain (97 aa).

The first 21 residues, 1–21, serve as a signal peptide directing secretion; the sequence is MNIMLFCSVFILVSLTGLSVS. The region spanning 25 to 88 is the LCN-type CS-alpha/beta domain; the sequence is PGNYPMSLYG…FWAAHKNHCK (64 aa). 3 cysteine pairs are disulfide-bonded: Cys39-Cys62, Cys48-Cys67, and Cys52-Cys69.

Belongs to the long (3 C-C) scorpion toxin superfamily. Monomer (edited version) and heterodimer (non-edited version) of this alpha chain and a beta chain (AC P0CI43). Expressed by the venom gland.

The protein localises to the secreted. Its function is as follows. The heterodimer non-edited LVP1 induces lipolysis in rat adipocytes. Induction of lipolysis by LVP1 appears to be mediated through the beta-2 adrenergic receptor pathway (ADRB2). In terms of biological role, the edited BmKBTx-like, similar to beta-toxins, may modulate voltage-gated sodium channels (Nav) and may block voltage-gated potassium channels (Kv). This Lychas mucronatus (Chinese swimming scorpion) protein is Lipolysis-activating peptide 1-alpha chain.